The chain runs to 109 residues: uncharacterized protein (109 aa).

It to A.calcoaceticus putative ferredoxin.

This is an uncharacterized protein from Escherichia coli O157:H7.